Consider the following 52-residue polypeptide: ATP synthase F(1) complex subunit epsilon, mitochondrial (52 aa).

3 positions are modified to N6-acetyllysine; alternate: Lys-21, Lys-32, and Lys-37. Lys-21, Lys-32, and Lys-37 each carry N6-succinyllysine; alternate. An N6-acetyllysine modification is found at Lys-44.

The protein belongs to the eukaryotic ATPase epsilon family. As to quaternary structure, component of the ATP synthase complex composed at least of ATP5F1A/subunit alpha, ATP5F1B/subunit beta, ATP5MC1/subunit c (homooctomer), MT-ATP6/subunit a, MT-ATP8/subunit 8, ATP5ME/subunit e, ATP5MF/subunit f, ATP5MG/subunit g, ATP5MK/subunit k, ATP5MJ/subunit j, ATP5F1C/subunit gamma, ATP5F1D/subunit delta, ATP5F1E/subunit epsilon, ATP5PF/subunit F6, ATP5PB/subunit b, ATP5PD/subunit d, ATP5PO/subunit OSCP. ATP synthase complex consists of a soluble F(1) head domain (subunits alpha(3) and beta(3)) - the catalytic core - and a membrane F(0) domain - the membrane proton channel (subunits c, a, 8, e, f, g, k and j). These two domains are linked by a central stalk (subunits gamma, delta, and epsilon) rotating inside the F1 region and a stationary peripheral stalk (subunits F6, b, d, and OSCP).

It localises to the mitochondrion. The protein resides in the mitochondrion inner membrane. Functionally, subunit epsilon, of the mitochondrial membrane ATP synthase complex (F(1)F(0) ATP synthase or Complex V) that produces ATP from ADP in the presence of a proton gradient across the membrane which is generated by electron transport complexes of the respiratory chain. ATP synthase complex consist of a soluble F(1) head domain - the catalytic core - and a membrane F(1) domain - the membrane proton channel. These two domains are linked by a central stalk rotating inside the F(1) region and a stationary peripheral stalk. During catalysis, ATP synthesis in the catalytic domain of F(1) is coupled via a rotary mechanism of the central stalk subunits to proton translocation. In vivo, can only synthesize ATP although its ATP hydrolase activity can be activated artificially in vitro. May be essential for the assembly of F(1) and may play an important role in the incorporation of the hydrophobic subunit c into the F(1)-c oligomer rotor of the mitochondrial ATP synthase complex. In Mus musculus (Mouse), this protein is ATP synthase F(1) complex subunit epsilon, mitochondrial.